Reading from the N-terminus, the 466-residue chain is Ribosomal protein uS12 methylthiotransferase RimO (466 aa).

The MTTase N-terminal domain occupies 18-133 (PRIGFVSLGC…VMDAVHQHVP (116 aa)). Positions 27, 63, 92, 164, 168, and 171 each coordinate [4Fe-4S] cluster. The Radical SAM core domain occupies 150–391 (LTPKHYAYLK…MAVAEAVSTA (242 aa)). The TRAM domain occupies 394-466 (QRRVGSSMQV…QGHDLIGELI (73 aa)).

The protein belongs to the methylthiotransferase family. RimO subfamily. The cofactor is [4Fe-4S] cluster.

The protein localises to the cytoplasm. The enzyme catalyses L-aspartate(89)-[ribosomal protein uS12]-hydrogen + (sulfur carrier)-SH + AH2 + 2 S-adenosyl-L-methionine = 3-methylsulfanyl-L-aspartate(89)-[ribosomal protein uS12]-hydrogen + (sulfur carrier)-H + 5'-deoxyadenosine + L-methionine + A + S-adenosyl-L-homocysteine + 2 H(+). Functionally, catalyzes the methylthiolation of an aspartic acid residue of ribosomal protein uS12. This chain is Ribosomal protein uS12 methylthiotransferase RimO, found in Leptothrix cholodnii (strain ATCC 51168 / LMG 8142 / SP-6) (Leptothrix discophora (strain SP-6)).